The following is a 330-amino-acid chain: Ketol-acid reductoisomerase (NADP(+)) (330 aa).

Positions 3–184 (LPVYYDKDID…GGGRMGVLET (182 aa)) constitute a KARI N-terminal Rossmann domain. NADP(+) contacts are provided by residues 26-29 (YGAQ), serine 52, and serine 54. The active site involves histidine 109. Glycine 135 is an NADP(+) binding site. A KARI C-terminal knotted domain is found at 185 to 329 (SFKEECESDL…EILRAPFNHK (145 aa)). Residues aspartate 193, glutamate 197, glutamate 229, and glutamate 233 each contribute to the Mg(2+) site. Serine 254 is a substrate binding site.

Belongs to the ketol-acid reductoisomerase family. Mg(2+) is required as a cofactor.

It catalyses the reaction (2R)-2,3-dihydroxy-3-methylbutanoate + NADP(+) = (2S)-2-acetolactate + NADPH + H(+). The catalysed reaction is (2R,3R)-2,3-dihydroxy-3-methylpentanoate + NADP(+) = (S)-2-ethyl-2-hydroxy-3-oxobutanoate + NADPH + H(+). It functions in the pathway amino-acid biosynthesis; L-isoleucine biosynthesis; L-isoleucine from 2-oxobutanoate: step 2/4. Its pathway is amino-acid biosynthesis; L-valine biosynthesis; L-valine from pyruvate: step 2/4. Involved in the biosynthesis of branched-chain amino acids (BCAA). Catalyzes an alkyl-migration followed by a ketol-acid reduction of (S)-2-acetolactate (S2AL) to yield (R)-2,3-dihydroxy-isovalerate. In the isomerase reaction, S2AL is rearranged via a Mg-dependent methyl migration to produce 3-hydroxy-3-methyl-2-ketobutyrate (HMKB). In the reductase reaction, this 2-ketoacid undergoes a metal-dependent reduction by NADPH to yield (R)-2,3-dihydroxy-isovalerate. The polypeptide is Ketol-acid reductoisomerase (NADP(+)) (Helicobacter pylori (strain Shi470)).